The following is a 627-amino-acid chain: (-)-alpha-terpineol synthase, chloroplastic (627 aa).

A chloroplast-targeting transit peptide spans 1-52 (MDLISVLPSASKSCVCLHKPLSSSTHKLKPFCKTIRILVMPRRWEFARPSMS). Mg(2+)-binding residues include Asp-378, Asp-382, and Asp-530. The short motif at 378–382 (DDMYD) is the DDXXD motif element.

The protein belongs to the terpene synthase family. Tpsd subfamily. It depends on Mg(2+) as a cofactor. Requires Mn(2+) as cofactor.

Its subcellular location is the plastid. It is found in the chloroplast. It carries out the reaction (2E)-geranyl diphosphate + H2O = (S)-alpha-terpineol + diphosphate. It functions in the pathway terpene metabolism; oleoresin biosynthesis. Its function is as follows. Involved in defensive oleoresin formation in conifers in response to insect attack or other injury. Involved in monoterpene (C10) olefins biosynthesis. Produces 57.3% alpha-terpineol (15.1% (+)/84.9% (-)), 27.6% limonene (25.2% (+)/74.8% (-)), 8% terpinolene, 4.7% beta-pinene (14.8% (+)/85.2% (-)), 1.3% alpha-pinene (100% (+)) and 1.1% myrcene. The protein is (-)-alpha-terpineol synthase, chloroplastic (PT10) of Pinus taeda (Loblolly pine).